We begin with the raw amino-acid sequence, 188 residues long: Elongation factor P (188 aa).

N6-(3,6-diaminohexanoyl)-5-hydroxylysine is present on Lys-34.

Belongs to the elongation factor P family. In terms of processing, may be beta-lysylated on the epsilon-amino group of Lys-34 by the combined action of EpmA and EpmB, and then hydroxylated on the C5 position of the same residue by EpmC (if this protein is present). Lysylation is critical for the stimulatory effect of EF-P on peptide-bond formation. The lysylation moiety may extend toward the peptidyltransferase center and stabilize the terminal 3-CCA end of the tRNA. Hydroxylation of the C5 position on Lys-34 may allow additional potential stabilizing hydrogen-bond interactions with the P-tRNA.

It is found in the cytoplasm. Its pathway is protein biosynthesis; polypeptide chain elongation. Its function is as follows. Involved in peptide bond synthesis. Alleviates ribosome stalling that occurs when 3 or more consecutive Pro residues or the sequence PPG is present in a protein, possibly by augmenting the peptidyl transferase activity of the ribosome. Modification of Lys-34 is required for alleviation. The chain is Elongation factor P from Citrobacter koseri (strain ATCC BAA-895 / CDC 4225-83 / SGSC4696).